A 521-amino-acid polypeptide reads, in one-letter code: GMP synthase [glutamine-hydrolyzing] (521 aa).

Residues 5-197 (KILILDFGSQ…VLDICGAQPG (193 aa)) form the Glutamine amidotransferase type-1 domain. C81 acts as the Nucleophile in catalysis. Residues H171 and E173 contribute to the active site. Residues 198–390 (WTMPNYIEEA…LGLPREMVYR (193 aa)) enclose the GMPS ATP-PPase domain. ATP is bound at residue 225 to 231 (SGGVDSS).

Homodimer.

The catalysed reaction is XMP + L-glutamine + ATP + H2O = GMP + L-glutamate + AMP + diphosphate + 2 H(+). It participates in purine metabolism; GMP biosynthesis; GMP from XMP (L-Gln route): step 1/1. Functionally, catalyzes the synthesis of GMP from XMP. This Neisseria meningitidis serogroup B (strain ATCC BAA-335 / MC58) protein is GMP synthase [glutamine-hydrolyzing] (guaA).